Consider the following 841-residue polypeptide: Neuronal tyrosine-phosphorylated phosphoinositide-3-kinase adapter 1 (841 aa).

Disordered regions lie at residues 1–45 (MNLL…PGVR), 64–448 (PASQ…PAAL), 655–679 (RAWN…TSGI), 745–769 (RPCS…PLPP), and 812–833 (LPSW…RRQH). The span at 8–25 (TKLEWRQHKEEEAKRSSS) shows a compositional bias: basic and acidic residues. Over residues 26 to 39 (KEVAPAGSAGPAAG) the composition is skewed to low complexity. Positions 76 to 186 (SAMAPRSLSC…DESCPPGPSP (111 aa)) are involved in CYFIP1- and NCKAP1-binding. The span at 94 to 103 (VGGGPGGASG) shows a compositional bias: gly residues. Residues 114–123 (PPAKPRRHPS) show a composition bias toward basic residues. Residues 167–176 (SPNTQLSVSF) show a composition bias toward polar residues. The span at 224–243 (FRGGGRSGGGLAGPPLGGGG) shows a compositional bias: gly residues. A compositionally biased stretch (acidic residues) spans 252 to 261 (SDSEESEAIY). Positions 279–295 (GPPPLTATSPPQQPHAL) are enriched in pro residues. The span at 759-769 (PALPLPLPLPP) shows a compositional bias: pro residues.

It belongs to the NYAP family. As to quaternary structure, interacts with ACOT9, ARHGAP26 and PIK3R2. Interacts with components of the WAVE1 complex, CYFIP1 and NCKAP1; this interaction mediates PI3K-WAVE1 association and actin cytoskeleton remodeling. In terms of processing, phosphorylated on tyrosine residues by FYN upon stimulation with CNTN5.

In terms of biological role, activates PI3K and concomitantly recruits the WAVE1 complex to the close vicinity of PI3K and regulates neuronal morphogenesis. The polypeptide is Neuronal tyrosine-phosphorylated phosphoinositide-3-kinase adapter 1 (NYAP1) (Homo sapiens (Human)).